Reading from the N-terminus, the 427-residue chain is Dihydroorotase (427 aa).

Zn(2+) contacts are provided by His60 and His62. Substrate is bound by residues 62 to 64 (HLR) and Asn94. Zn(2+)-binding residues include Asp152, His179, and His232. Asn278 contacts substrate. Asp305 contributes to the Zn(2+) binding site. Asp305 is a catalytic residue. Residues His309 and 323 to 324 (FG) each bind substrate.

This sequence belongs to the metallo-dependent hydrolases superfamily. DHOase family. Class I DHOase subfamily. Zn(2+) is required as a cofactor.

It carries out the reaction (S)-dihydroorotate + H2O = N-carbamoyl-L-aspartate + H(+). It participates in pyrimidine metabolism; UMP biosynthesis via de novo pathway; (S)-dihydroorotate from bicarbonate: step 3/3. Functionally, catalyzes the reversible cyclization of carbamoyl aspartate to dihydroorotate. The protein is Dihydroorotase of Geobacillus sp. (strain WCH70).